Reading from the N-terminus, the 267-residue chain is Trehalose 2-sulfotransferase (267 aa).

Alpha,alpha-trehalose-binding positions include Q14, 33 to 39 (EPQEFFQ), P48, and W53. E36 acts as the Proton acceptor in catalysis.

Belongs to the Stf0 sulfotransferase family. In terms of assembly, homodimer.

It catalyses the reaction alpha,alpha-trehalose + 3'-phosphoadenylyl sulfate = 2-O-sulfo-alpha,alpha-trehalose + adenosine 3',5'-bisphosphate + H(+). The protein operates within glycolipid metabolism. Its function is as follows. Catalyzes the sulfuryl group transfer from 3'-phosphoadenosine-5'-phosphosulfate (PAPS) to trehalose, leading to trehalose-2-sulfate (T2S). The sulfation of trehalose is the first step in the biosynthesis of sulfolipid-1 (SL-1), a major cell wall glycolipid in pathogenic mycobacteria. Cannot use free glucose and unnatural stereoisomers of trehalose (alpha,beta (neo-trehalose) and beta,beta (iso-trehalose)) as substrates. The protein is Trehalose 2-sulfotransferase of Mycolicibacterium smegmatis (strain ATCC 700084 / mc(2)155) (Mycobacterium smegmatis).